A 119-amino-acid chain; its full sequence is MPRVKRGVTARARHKKVLDQAKGYRGRRSKVYRIAKQAVMRAGQYAYRDRRNKKRVFRALWITRINAASREHGLTYSVFMNGLKRASIELDRKVLADMAVMDKPAFAAIVNQVKTTIAA.

Belongs to the bacterial ribosomal protein bL20 family.

Functionally, binds directly to 23S ribosomal RNA and is necessary for the in vitro assembly process of the 50S ribosomal subunit. It is not involved in the protein synthesizing functions of that subunit. This is Large ribosomal subunit protein bL20 from Herminiimonas arsenicoxydans.